A 755-amino-acid polypeptide reads, in one-letter code: LIM domain and actin-binding protein 1 (755 aa).

An N-acetylmethionine modification is found at Met-1. Ser-15 carries the phosphoserine modification. Over residues 43–56 (KAAEEANMERKKNN) the composition is skewed to basic and acidic residues. A disordered region spans residues 43–151 (KAAEEANMER…YPRSEDSHDF (109 aa)). Residues 88 to 97 (DSLPNSSSDG) show a composition bias toward polar residues. Ser-132 carries the phosphoserine modification. The short motif at 164-166 (CLG) is the Required for interaction with NPC1L1 element. Basic and acidic residues-rich tracts occupy residues 168–177 (SRHEAEKPEM) and 199–208 (MMFEKGEHSQ). A disordered region spans residues 168 to 226 (SRHEAEKPEMSENTETSGKIEKYNVPLNRLKMMFEKGEHSQNKSPWTQGRNAGGRRLSE). A phosphoserine mark is found at Ser-225, Ser-230, and Ser-242. A disordered region spans residues 241–379 (LSSSAFNSEK…ESSPSKTAKK (139 aa)). Positions 249–258 (EKNESKRNLE) are enriched in basic and acidic residues. Ser-263 bears the Phosphoserine mark. Positions 292-305 (KPSESKTHKWEQKE) are enriched in basic and acidic residues. Residues 342–354 (CNSQGRSEAQQPI) are compositionally biased toward polar residues. A phosphoserine mark is found at Ser-348, Ser-360, Ser-367, and Ser-372. A compositionally biased stretch (polar residues) spans 363 to 375 (ARTSSLPESSPSK). Residues 386-446 (ESCVECQKTV…KPHFNQLFKS (61 aa)) form the LIM zinc-binding domain. Lys-437 carries the N6-succinyllysine modification. Disordered stretches follow at residues 468–493 (ENEE…GVED) and 505–714 (SMEA…DTTT). Position 488 is a phosphoserine (Ser-488). The segment at 491 to 511 (VEDAPIAKVGVLAASMEAKAS) is required for interaction with MYO5B. Composition is skewed to basic and acidic residues over residues 512–526 (SQRE…ETKK) and 555–566 (WPPEDEVCKTEA). The segment covering 599–611 (SSVKSPKPLSPSL) has biased composition (low complexity). Residues Ser-600, Ser-603, Ser-608, and Ser-616 each carry the phosphoserine modification. 2 stretches are compositionally biased toward basic and acidic residues: residues 638 to 653 (RPSR…RWQS) and 662 to 673 (EAPRGRDGRSFE). Phosphoserine occurs at positions 697, 722, and 737.

As to quaternary structure, interacts with NPC1L1; bridges NPC1L1 with MYO5B. Interacts with MYO5B; bridges MYO5B with NPC1L1. Interacts with PXN; this complex stabilizes actin dynamics. Interacts with F-actin and G-actin. Interacts with LUZP1 (via C-terminus); both proteins restrict ciliation and may work together to regulate this process. Binds RAB40B (GTP-bound); interaction influences LIMA1 subcellular localization in lamellipodia during cell migration. Post-translationally, phosphorylation of the C-terminal region by MAPK1/MAPK3 reduces its association with F-actin and contributes to actin filament reorganization and enhanced cell motility. Ubiquitinated by the ECS(RAB40B) complex leading to its degradation. Expressed throughout the kidney, including renal cortex, medulla, and glomeruli. Expressed in glomeruli, tubular epithelial cells, and extraglomerular vascular endothelial cells (at protein level).

The protein resides in the cytoplasm. It localises to the cell junction. The protein localises to the focal adhesion. Its subcellular location is the cytoskeleton. It is found in the stress fiber. The protein resides in the cell membrane. It localises to the cell projection. The protein localises to the ruffle. Its subcellular location is the lamellipodium. Actin-binding protein involved in actin cytoskeleton regulation and dynamics. Increases the number and size of actin stress fibers and inhibits membrane ruffling. Inhibits actin filament depolymerization. Bundles actin filaments, delays filament nucleation and reduces formation of branched filaments. Acts as a negative regulator of primary cilium formation. Plays a role in cholesterol homeostasis. Influences plasma cholesterol levels through regulation of intestinal cholesterol absorption. May act as a scaffold protein by regulating NPC1L1 transportation, an essential protein for cholesterol absorption, to the plasma membrane by recruiting MYO5B to NPC1L1, and thus facilitates cholesterol uptake. The polypeptide is LIM domain and actin-binding protein 1 (Rattus norvegicus (Rat)).